The sequence spans 61 residues: Small ribosomal subunit protein uS14 (61 aa).

The Zn(2+) site is built by C24, C27, C40, and C43.

It belongs to the universal ribosomal protein uS14 family. Zinc-binding uS14 subfamily. Part of the 30S ribosomal subunit. Contacts proteins S3 and S10. Requires Zn(2+) as cofactor.

Binds 16S rRNA, required for the assembly of 30S particles and may also be responsible for determining the conformation of the 16S rRNA at the A site. The polypeptide is Small ribosomal subunit protein uS14 (Frankia casuarinae (strain DSM 45818 / CECT 9043 / HFP020203 / CcI3)).